We begin with the raw amino-acid sequence, 74 residues long: Cytochrome c oxidase subunit 6C (74 aa).

Residues 2–12 (STALAKPQMRG) are Mitochondrial matrix-facing. A helical transmembrane segment spans residues 13–53 (LLARRLRFHIVGAFMVSLGFATFYKFAVAEKRKKAYADFYR). At 54–74 (NYDSMKDFEEMRKAGIFQSAK) the chain is on the mitochondrial intermembrane side.

The protein belongs to the cytochrome c oxidase subunit 6c family. As to quaternary structure, component of the cytochrome c oxidase (complex IV, CIV), a multisubunit enzyme composed of 14 subunits. The complex is composed of a catalytic core of 3 subunits MT-CO1, MT-CO2 and MT-CO3, encoded in the mitochondrial DNA, and 11 supernumerary subunits COX4I1 (or COX4I2), COX5A, COX5B, COX6A2 (or COX6A1), COX6B1 (or COX6B2), COX6C, COX7A1 (or COX7A2), COX7B, COX7C, COX8B and NDUFA4, which are encoded in the nuclear genome. The complex exists as a monomer or a dimer and forms supercomplexes (SCs) in the inner mitochondrial membrane with NADH-ubiquinone oxidoreductase (complex I, CI) and ubiquinol-cytochrome c oxidoreductase (cytochrome b-c1 complex, complex III, CIII), resulting in different assemblies (supercomplex SCI(1)III(2)IV(1) and megacomplex MCI(2)III(2)IV(2)).

Its subcellular location is the mitochondrion inner membrane. It participates in energy metabolism; oxidative phosphorylation. Component of the cytochrome c oxidase, the last enzyme in the mitochondrial electron transport chain which drives oxidative phosphorylation. The respiratory chain contains 3 multisubunit complexes succinate dehydrogenase (complex II, CII), ubiquinol-cytochrome c oxidoreductase (cytochrome b-c1 complex, complex III, CIII) and cytochrome c oxidase (complex IV, CIV), that cooperate to transfer electrons derived from NADH and succinate to molecular oxygen, creating an electrochemical gradient over the inner membrane that drives transmembrane transport and the ATP synthase. Cytochrome c oxidase is the component of the respiratory chain that catalyzes the reduction of oxygen to water. Electrons originating from reduced cytochrome c in the intermembrane space (IMS) are transferred via the dinuclear copper A center (CU(A)) of subunit 2 and heme A of subunit 1 to the active site in subunit 1, a binuclear center (BNC) formed by heme A3 and copper B (CU(B)). The BNC reduces molecular oxygen to 2 water molecules using 4 electrons from cytochrome c in the IMS and 4 protons from the mitochondrial matrix. In Bos taurus (Bovine), this protein is Cytochrome c oxidase subunit 6C (COX6C).